Reading from the N-terminus, the 267-residue chain is MSTYNWDEKHILTFPEEKVALSTKDVHVYYGKNESIKGIDMQFERNKITALIGPSGSGKSTYLRSLNRMNDTIDIAKVTGQILYRGIDVNRPEINVYEMRKHIGMVFQRPNPFAKSIYRNITFAHERAGVKDKQVLDEIVETSLRQAALWDQVKDDLHKSALTLSGGQQQRLCIARAISVKPDILLMDEPASALDPIATMQLEETMFELKKDFTIIIVTHNMQQAARASDYTGFFYLGDLIEYDKTATIFQNAKLQSTNDYVSGHFG.

Residues 21–262 form the ABC transporter domain; the sequence is LSTKDVHVYY…AKLQSTNDYV (242 aa). 53–60 is an ATP binding site; that stretch reads GPSGSGKS.

The protein belongs to the ABC transporter superfamily. Phosphate importer (TC 3.A.1.7) family. The complex is composed of two ATP-binding proteins (PstB), two transmembrane proteins (PstC and PstA) and a solute-binding protein (PstS).

The protein resides in the cell membrane. It carries out the reaction phosphate(out) + ATP + H2O = ADP + 2 phosphate(in) + H(+). In terms of biological role, part of the ABC transporter complex PstSACB involved in phosphate import. Responsible for energy coupling to the transport system. This is Phosphate import ATP-binding protein PstB 2 from Streptococcus pneumoniae (strain ATCC BAA-255 / R6).